A 151-amino-acid chain; its full sequence is MSTEQTFIAVKPDAVQRGLIGYIISKFELKGYKLRALKFLVPSRDLVEEHYAEHKGKPFYEKLVGFMASGPVCAMIWEGKQAVKTGRLMLGASNPLDSAPGTIRGDYGIDLGRNVCHGSDSIESANREIKLWFQPSEIQVYDRTIEPWIYE.

5 residues coordinate ATP: lysine 11, phenylalanine 59, arginine 87, arginine 104, and asparagine 114. Histidine 117 (pros-phosphohistidine intermediate) is an active-site residue.

Belongs to the NDK family. In terms of assembly, homotrimer. Mg(2+) is required as a cofactor.

It catalyses the reaction a 2'-deoxyribonucleoside 5'-diphosphate + ATP = a 2'-deoxyribonucleoside 5'-triphosphate + ADP. The enzyme catalyses a ribonucleoside 5'-diphosphate + ATP = a ribonucleoside 5'-triphosphate + ADP. Functionally, major role in the synthesis of nucleoside triphosphates other than ATP. The ATP gamma phosphate is transferred to the NDP beta phosphate via a ping-pong mechanism, using a phosphorylated active-site intermediate. The protein is Nucleoside diphosphate kinase (ndk1) of Schizosaccharomyces pombe (strain 972 / ATCC 24843) (Fission yeast).